Here is a 215-residue protein sequence, read N- to C-terminus: Elongation factor Ts (215 aa).

Positions 80-83 (TDFV) are involved in Mg(2+) ion dislocation from EF-Tu.

The protein belongs to the EF-Ts family.

Its subcellular location is the cytoplasm. In terms of biological role, associates with the EF-Tu.GDP complex and induces the exchange of GDP to GTP. It remains bound to the aminoacyl-tRNA.EF-Tu.GTP complex up to the GTP hydrolysis stage on the ribosome. This is Elongation factor Ts from Heliobacterium modesticaldum (strain ATCC 51547 / Ice1).